Reading from the N-terminus, the 377-residue chain is Caspase-4 (377 aa).

The segment at 1 to 59 is required for LPS-binding; it reads MAEDKHNKNPLKMLESLGKELISGLLDDFVEKNVLKLEEEEKKKIYDAKLQDKARVLVD. Positions 1–80 are excised as a propeptide; sequence MAEDKHNKNP…VFVQTFLNID (80 aa). The CARD domain occupies 1–91; that stretch reads MAEDKHNKNP…NSTSIKAPEE (91 aa). Position 83 is a phosphoserine (serine 83). Residues histidine 210 and cysteine 258 contribute to the active site. Positions 271–289 are excised as a propeptide; the sequence is SPPALADSFSQSSENLEED.

Belongs to the peptidase C14A family. As to quaternary structure, heterotetramer that consists of two anti-parallel arranged heterodimers, each one formed by a 20 kDa (Caspase-4 subunit p20) and a 10 kDa (Caspase-4 subunit p10) subunit. Upon direct LPS-binding, forms large homooligomers, resulting in its activation. These oligomers are often referred to as 'non-canonical inflammasomes'. In its precursor form, interacts with TMEM214; this interaction is required for association with the endoplasmic reticulum membrane. Interacts with CASP1. Interacts with NOD2. Interacts with Serpinb1a, Serpinb1b and Serpinb1c; these interactions regulate CASP4 activity. In terms of assembly, heterotetramer that consists of two anti-parallel arranged heterodimers, each one formed by a 20 kDa (Caspase-4 subunit p20) and a 10 kDa (Caspase-4 subunit p10) subunit. Post-translationally, in response to activation signals, undergoes autoproteolytic cleavage and activation.

The protein localises to the cytoplasm. Its subcellular location is the cytosol. It localises to the endoplasmic reticulum membrane. It is found in the mitochondrion. The protein resides in the inflammasome. The protein localises to the secreted. The catalysed reaction is Strict requirement for Asp at the P1 position. It has a preferred cleavage sequence of Tyr-Val-Ala-Asp-|- but also cleaves at Asp-Glu-Val-Asp-|-.. Its activity is regulated as follows. Activated by homooligomerization induced by direct binding to cytosolic LPS, in a TLR4-independent manner. In addition to LPS, CASP4/CASP11 may also be activated by oxidized phospholipid 1-palmitoyl-2-arachidonoyl- sn-glycero-3-phosphorylcholine, an oxidized phospholipid (oxPAPC), in dendritic cells, promoting adaptive immunity. The role of oxPAPC is however unclear and another report suggests that oxPAPC competes with LPS-binding and inhibits the non-canonical inflammasome in macrophages. In terms of biological role, inflammatory caspase that acts as the effector of the non-canonical inflammasome by mediating lipopolysaccharide (LPS)-induced pyroptosis. Also indirectly activates the NLRP3 and NLRP6 inflammasomes. Acts as a thiol protease that cleaves a tetrapeptide after an Asp residue at position P1: catalyzes cleavage of CGAS, GSDMD and IL18. Effector of the non-canonical inflammasome independently of NLRP3 inflammasome and CASP1: the non-canonical inflammasome promotes pyroptosis through GSDMD cleavage without involving secretion of cytokine IL1B. In the non-canonical inflammasome, CASP4 is activated by direct binding to the lipid A moiety of LPS without the need of an upstream sensor. LPS-binding promotes CASP4 activation and CASP4-mediated cleavage of GSDMD and IL18, followed by IL18 secretion through the GSDMD pore, pyroptosis of infected cells and their extrusion into the gut lumen. Also indirectly promotes secretion of mature cytokines (IL1A and HMGB1) downstream of GSDMD-mediated pyroptosis via activation of the NLRP3 and NLRP6 inflammasomes. Involved in NLRP3-dependent CASP1 activation and IL1B secretion in response to non-canonical activators, such as UVB radiation or cholera enterotoxin. Involved in NLRP6 inflammasome-dependent activation in response to lipoteichoic acid (LTA), a cell-wall component of Gram-positive bacteria, which leads to CASP1 activation and IL1B secretion. Involved in LPS-induced IL6 secretion; this activity may not require caspase enzymatic activity. The non-canonical inflammasome is required for innate immunity to cytosolic, but not vacuolar, bacteria. Plays a crucial role in the restriction of S.typhimurium replication in colonic epithelial cells during infection. Pyroptosis limits bacterial replication, while cytokine secretion promotes the recruitment and activation of immune cells and triggers mucosal inflammation. May also act as an activator of adaptive immunity in dendritic cells, following activation by oxidized phospholipid 1-palmitoyl-2-arachidonoyl- sn-glycero-3-phosphorylcholine, an oxidized phospholipid (oxPAPC). Cleavage of GSDMD is not strictly dependent on the consensus cleavage site but depends on an exosite interface on CASP4 that recognizes and binds the Gasdermin-D, C-terminal (GSDMD-CT) part. Catalyzes cleavage and maturation of IL18; IL18 processing also depends of the exosite interface on CASP4. In contrast, it does not directly process IL1B. During non-canonical inflammasome activation, cuts CGAS and may play a role in the regulation of antiviral innate immune activation. The sequence is that of Caspase-4 (CASP4) from Bos taurus (Bovine).